The chain runs to 1416 residues: DNA-directed RNA polymerase subunit beta (1416 aa).

The tract at residues 1388–1416 (AKAAREQAEGELGGPLGTPRGAAAEKNTA) is disordered.

The protein belongs to the RNA polymerase beta chain family. In terms of assembly, the RNAP catalytic core consists of 2 alpha, 1 beta, 1 beta' and 1 omega subunit. When a sigma factor is associated with the core the holoenzyme is formed, which can initiate transcription.

The catalysed reaction is RNA(n) + a ribonucleoside 5'-triphosphate = RNA(n+1) + diphosphate. In terms of biological role, DNA-dependent RNA polymerase catalyzes the transcription of DNA into RNA using the four ribonucleoside triphosphates as substrates. The sequence is that of DNA-directed RNA polymerase subunit beta from Anaeromyxobacter sp. (strain Fw109-5).